Consider the following 236-residue polypeptide: Large ribosomal subunit protein uL1 (236 aa).

This sequence belongs to the universal ribosomal protein uL1 family. In terms of assembly, part of the 50S ribosomal subunit.

Functionally, binds directly to 23S rRNA. The L1 stalk is quite mobile in the ribosome, and is involved in E site tRNA release. In terms of biological role, protein L1 is also a translational repressor protein, it controls the translation of the L11 operon by binding to its mRNA. The chain is Large ribosomal subunit protein uL1 from Protochlamydia amoebophila (strain UWE25).